A 216-amino-acid chain; its full sequence is Ras-related protein Rab11A (216 aa).

Residues 19–27 (GDSGVGKSN), 38–44 (CLESKST), 67–71 (DTAGQ), 125–128 (NKSD), and 155–157 (SAL) contribute to the GTP site. The Effector region signature appears at 41 to 49 (SKSTIGVEF). 2 S-geranylgeranyl cysteine lipidation sites follow: cysteine 213 and cysteine 214.

The protein belongs to the small GTPase superfamily. Rab family.

Its subcellular location is the cell membrane. The chain is Ras-related protein Rab11A (RAB11A) from Nicotiana tabacum (Common tobacco).